The sequence spans 114 residues: Ribosome-binding factor A (114 aa).

Belongs to the RbfA family. As to quaternary structure, monomer. Binds 30S ribosomal subunits, but not 50S ribosomal subunits or 70S ribosomes.

It localises to the cytoplasm. Functionally, one of several proteins that assist in the late maturation steps of the functional core of the 30S ribosomal subunit. Associates with free 30S ribosomal subunits (but not with 30S subunits that are part of 70S ribosomes or polysomes). Required for efficient processing of 16S rRNA. May interact with the 5'-terminal helix region of 16S rRNA. This Phytoplasma mali (strain AT) protein is Ribosome-binding factor A.